We begin with the raw amino-acid sequence, 228 residues long: ATP synthase subunit a (228 aa).

6 helical membrane passes run 19 to 39 (AIYI…AVAV), 81 to 101 (LIAT…IPGF), 107 to 127 (SLNL…FEGI), 136 to 156 (FAGF…IEVI), 178 to 198 (LFLL…PYAL), and 204 to 224 (ILQA…AVVV).

The protein belongs to the ATPase A chain family. F-type ATPases have 2 components, CF(1) - the catalytic core - and CF(0) - the membrane proton channel. CF(1) has five subunits: alpha(3), beta(3), gamma(1), delta(1), epsilon(1). CF(0) has three main subunits: a(1), b(2) and c(9-12). The alpha and beta chains form an alternating ring which encloses part of the gamma chain. CF(1) is attached to CF(0) by a central stalk formed by the gamma and epsilon chains, while a peripheral stalk is formed by the delta and b chains.

The protein localises to the cell inner membrane. Its function is as follows. Key component of the proton channel; it plays a direct role in the translocation of protons across the membrane. This is ATP synthase subunit a from Campylobacter hominis (strain ATCC BAA-381 / DSM 21671 / CCUG 45161 / LMG 19568 / NCTC 13146 / CH001A).